A 349-amino-acid polypeptide reads, in one-letter code: S-adenosylmethionine:tRNA ribosyltransferase-isomerase (349 aa).

It belongs to the QueA family. As to quaternary structure, monomer.

It is found in the cytoplasm. The enzyme catalyses 7-aminomethyl-7-carbaguanosine(34) in tRNA + S-adenosyl-L-methionine = epoxyqueuosine(34) in tRNA + adenine + L-methionine + 2 H(+). It functions in the pathway tRNA modification; tRNA-queuosine biosynthesis. In terms of biological role, transfers and isomerizes the ribose moiety from AdoMet to the 7-aminomethyl group of 7-deazaguanine (preQ1-tRNA) to give epoxyqueuosine (oQ-tRNA). This is S-adenosylmethionine:tRNA ribosyltransferase-isomerase from Pseudomonas putida (strain W619).